The chain runs to 124 residues: Late histone H2A.2.1 (124 aa).

A compositionally biased stretch (basic residues) spans 1 to 18 (MSGRGKGAKAKSKAKSRS). The segment at 1–21 (MSGRGKGAKAKSKAKSRSSRA) is disordered. Serine 2 is subject to N-acetylserine. Residue serine 2 is modified to Phosphoserine. Glutamine 104 is subject to N5-methylglutamine. Residue lysine 119 forms a Glycyl lysine isopeptide (Lys-Gly) (interchain with G-Cter in ubiquitin) linkage.

This sequence belongs to the histone H2A family. As to quaternary structure, the nucleosome is a histone octamer containing two molecules each of H2A, H2B, H3 and H4 assembled in one H3-H4 heterotetramer and two H2A-H2B heterodimers. The octamer wraps approximately 147 bp of DNA. In terms of processing, monoubiquitination of Lys-119 gives a specific tag for epigenetic transcriptional repression. Phosphorylation of Ser-2 directly represses transcription.

It localises to the nucleus. The protein resides in the chromosome. Functionally, core component of nucleosome. Nucleosomes wrap and compact DNA into chromatin, limiting DNA accessibility to the cellular machineries which require DNA as a template. Histones thereby play a central role in transcription regulation, DNA repair, DNA replication and chromosomal stability. DNA accessibility is regulated via a complex set of post-translational modifications of histones, also called histone code, and nucleosome remodeling. This is Late histone H2A.2.1 from Psammechinus miliaris (Green sea urchin).